A 211-amino-acid polypeptide reads, in one-letter code: Putative transposase for insertion sequence element IS402 (211 aa).

The disordered stretch occupies residues arginine 51 to lysine 71.

Belongs to the transposase 11 family.

In terms of biological role, involved in the transposition of the insertion sequence. The polypeptide is Putative transposase for insertion sequence element IS402 (Burkholderia cepacia (Pseudomonas cepacia)).